An 80-amino-acid chain; its full sequence is D-alanyl carrier protein 1 (80 aa).

Residues 1–80 form the Carrier domain; it reads MTMDDTKATV…KIVAKVENLQ (80 aa). Residue Ser-38 is modified to O-(pantetheine 4'-phosphoryl)serine.

Belongs to the DltC family. Post-translationally, 4'-phosphopantetheine is transferred from CoA to a specific serine of apo-DCP.

The protein resides in the cytoplasm. The protein operates within cell wall biogenesis; lipoteichoic acid biosynthesis. Its function is as follows. Carrier protein involved in the D-alanylation of lipoteichoic acid (LTA). The loading of thioester-linked D-alanine onto DltC is catalyzed by D-alanine--D-alanyl carrier protein ligase DltA. The DltC-carried D-alanyl group is further transferred to cell membrane phosphatidylglycerol (PG) by forming an ester bond, probably catalyzed by DltD. D-alanylation of LTA plays an important role in modulating the properties of the cell wall in Gram-positive bacteria, influencing the net charge of the cell wall. This chain is D-alanyl carrier protein 1, found in Lactiplantibacillus plantarum (strain ATCC BAA-793 / NCIMB 8826 / WCFS1) (Lactobacillus plantarum).